A 741-amino-acid polypeptide reads, in one-letter code: uncharacterized protein (741 aa).

A compositionally biased stretch (polar residues) spans 1–17 (MDSNTNENNSHASSNER). The interval 1-50 (MDSNTNENNSHASSNERQSSEGHDDYLNRNPNSEATEGEEGTHPTTGTQP) is disordered. Over residues 18–27 (QSSEGHDDYL) the composition is skewed to basic and acidic residues. Residues 107–150 (CPICYDDMNENDEKQATKMPCGHIFGKNCLQKWLENHCTCPLCR) form an RING-type 1; degenerate zinc finger. Composition is skewed to polar residues over residues 177-193 (GNQG…SNGV), 252-263 (PDSNTSTPTTRS), and 277-302 (NASS…NAFF). Disordered stretches follow at residues 177–214 (GNQG…RTGV), 238–387 (SATN…NTNR), 500–543 (QPAV…PGIT), 561–619 (ENRM…TPTH), 638–688 (STPS…PQCQ), and 713–741 (RCQQ…EEHK). The segment covering 316-332 (TSNLTSNSGSMTNSTST) has biased composition (low complexity). Polar residues-rich tracts occupy residues 333–344 (DLPTSNLPSQNA) and 357–386 (PPNL…ANTN). Polar residues-rich tracts occupy residues 563-586 (RMNQ…SINV), 604-619 (ENSS…TPTH), and 652-661 (SKVSSGTSTP). The RING-type 2; degenerate zinc-finger motif lies at 687 to 736 (CQLEDQGICDPNDRFVHFECGHSVHERCQQSTSNSENQMDEEIGECPKCR). A compositionally biased stretch (basic and acidic residues) spans 731 to 741 (ECPKCRNEEHK).

It localises to the nucleus. This is an uncharacterized protein from Schizosaccharomyces pombe (strain 972 / ATCC 24843) (Fission yeast).